The following is a 1000-amino-acid chain: Vacuolar sorting protein 39 (1000 aa).

A CNH domain is found at 16-282; the sequence is PARIDAVESY…RRLVKSNNAV (267 aa). A disordered region spans residues 394 to 413; the sequence is DEASLSRGSSGISDDMESSS. Residues 607–796 form a CHCR repeat; that stretch reads YSMLVLESCP…YLNPKKSAKD (190 aa). The tract at residues 844-864 is disordered; the sequence is GLSSSTDSGRSDVDTEEPLEE.

Belongs to the VAM6/VPS39 family. Homooligomer. Component of the homotypic fusion and vacuole protein sorting (HOPS) complex composed of the class C Vps core proteins VPS11, VCL1, VPS18 and VPS33, which in HOPS further associates with VPS39 and VPS41. Interacts directly with VPS11. Binds to RABG3B.

It localises to the cytoplasm. The protein resides in the vacuole membrane. Functionally, essential protein required during embryogenesis. Believed to act in part as a component of the putative HOPS endosomal tethering complex. HOPS is required for the central vacuole formation. May play a role in clustering and fusion of late endosomes and lysosomes. Plays a role in vesicle-mediated protein trafficking to lysosomal compartments including the endocytic membrane transport and autophagic pathways. Required for fusion of endosomes and autophagosomes with lysosomes. This Arabidopsis thaliana (Mouse-ear cress) protein is Vacuolar sorting protein 39.